Here is a 482-residue protein sequence, read N- to C-terminus: MIFLIFSILFLHLANCDYTPDWESLDNRPLPSWYDDSKFGIFCHWGLYSVPAFRSEWMWWYWKGTQPDKDVVNFVDKNYKPGTTYADFAKDFTAEYFNANQFAETVKTSGARYFVFTSKHHEGFTMWPSRTSWNWNSMDIGPKRDIVGELRDAFKKTDVHFGLYFSQFEWFHPMFLDDGKFNTTFYPEQVSYPQMIDIVTKYNPEVVWSDGEWDKSDDYWKAKEFLAWLYNSSPVKDQVVVNDRWGTGTMGKHGGFMTYSDHYDPGKLLEKKWENCMTLDKHSWGNRRDMKASEVNTAYEIIEQLARTIACNGNLLLNVGPNMHGQIPAIFEDRLEEIGRFVNITSEAIFGTRPWIHQNDTSASNVWYTSKYSSGKKPLKNLYQNVYNFQLEEHTIVYAWILDTSHEQFELKSVKTTKNTTATILGTDVVLTGFEESDSMIILSSKIDWKKLPRRDIIVLKIEKAASYLRNPLMSTNEHHVQ.

The N-terminal stretch at 1–16 (MIFLIFSILFLHLANC) is a signal peptide. N-linked (GlcNAc...) asparagine glycosylation is found at asparagine 182, asparagine 343, asparagine 359, and asparagine 419.

The protein belongs to the glycosyl hydrolase 29 family.

It carries out the reaction an alpha-L-fucoside + H2O = L-fucose + an alcohol. Its function is as follows. Alpha-L-fucosidase is responsible for hydrolyzing the alpha-1,6-linked fucose joined to the reducing-end N-acetylglucosamine of the carbohydrate moieties of glycoproteins. This is Putative alpha-L-fucosidase from Caenorhabditis elegans.